The following is a 364-amino-acid chain: Trans-enoyl reductase ccsC (364 aa).

Cys-52–Lys-55 contacts NADP(+). Thr-141 to Met-148 serves as a coordination point for substrate. Residues Ser-176 to Val-179, Ser-199 to Asn-202, Tyr-217, and Leu-264 to Glu-265 contribute to the NADP(+) site. Gly-284–Leu-288 is a substrate binding site. Val-353–Ser-354 provides a ligand contact to NADP(+).

This sequence belongs to the zinc-containing alcohol dehydrogenase family. In terms of assembly, monomer.

It functions in the pathway mycotoxin biosynthesis. Trans-enoyl reductase; part of the gene cluster that mediates the biosynthesis of a family of the mycotoxins cytochalasins E and K. The hybrid PKS-NRPS synthetase ccsA and the enoyl reductase ccsC are responsible for fusion of phenylalanine with an octaketide backbone and subsequent release of the stable tetramic acid precursor. The polyketide synthase module (PKS) of the PKS-NRPS ccsA is responsible for the synthesis of the octaketide backbone. The downstream nonribosomal peptide synthetase (NRPS) amidates the carboxyl end of the octaketide with a phenylalanine. A reductase-like domain (R) at the C-terminus catalyzes the reductive release of the polyketide-amino acid intermediate. Because ccsA lacks a designated enoylreductase (ER) domain, the required activity is provided the enoyl reductase ccsC. Upon formation of the 11-membered carbocycle-fused perhydroisoindolone intermediate, a number of oxidative steps are required to afford the final cytochalasin E and K, including two hydroxylations at C17 and C18, one alcohol oxidation at C17, one epoxidation at C6 and C7 and two Baeyer-Villiger oxidations. The oxidative modification at C17, C18 and the C6-C7 epoxidation are likely to be catalyzed by the two cytochrome P450 oxygenases ccsD and ccsG. CcsD may be responsible for the epoxidation of the C6-C7 double bond. CcsG may be responsible for the successive oxidative modifications at C17 and C18. The double Baeyer-Villiger oxidations of ketocytochalasin to precytochalasin and cytochalasin Z(16) are among the final steps leading to cytochalasin E and K and are catalyzed by ccsB. The first oxygen insertion step follows that of the classic BVMO mechanism, generating the ester precytochalasin. Release of precytochalasin into an aqueous environment can generate the shunt product iso-precytochalasin through spontaneous isomerization. Alternatively, precytochalasin can undergo further oxidation by ccsB to yield the in-line carbonate-containing cytochalasin Z(16). Cytochalasin Z(16) is a precursor to cytochalasin E and cytochalasin K, whereas iso-precytochalasin is a precursor to cytochalasin Z(17) and rosellichalasin. The hydrolyase ccsE may catalyze hydrolysis of epoxide bond in cytochalasin E to afford cytochalasin K. The function of ccsF has not been assigned but it may play a role in post-PKS-NRPS biosynthetic step, resistance or transport of cytochalasins and related PKS-NRPS products. The protein is Trans-enoyl reductase ccsC of Aspergillus clavatus (strain ATCC 1007 / CBS 513.65 / DSM 816 / NCTC 3887 / NRRL 1 / QM 1276 / 107).